Here is a 384-residue protein sequence, read N- to C-terminus: Dehydrogenase ALT3 (384 aa).

Belongs to the iron-containing alcohol dehydrogenase family. The cofactor is Fe cation.

Its pathway is mycotoxin biosynthesis. Functionally, dehydrogenase; part of the gene cluster that mediates the biosynthesis of the host-selective toxins (HSTs) AAL-toxins, sphinganine-analog mycotoxins responsible for Alternaria stem canker on tomato by the tomato pathotype. The biosynthesis starts with the polyketide synthase ALT1-catalyzed C-16 carbon chain assembly from one starter acetyl-CoA unit with malonyl-CoA extender units. ALT1 also selectively transfers methyl groups at the first and the third cycle of chain elongation for AAL toxin. The C-16 polyketide chain is released from the enzyme by a nucleophilic attack of a carbanion, which is derived from R-carbon of glycin by decarboxylation, on the carbonyl carbon of polyketide acyl chain. This step is probably catalyzed by a pyridoxal 5'-phosphate-dependent aminoacyl transferase ALT4. The respective functions of the other enzymes encoded by the cluster have still to be elucidated. The sphingosine N-acyltransferase-like protein ALT7 seems not to act as a resistance/self-tolerance factor against the toxin in the toxin biosynthetic gene cluster, contrary to what is expected. The polypeptide is Dehydrogenase ALT3 (Alternaria alternata (Alternaria rot fungus)).